The primary structure comprises 276 residues: Putative phosphoenolpyruvate synthase regulatory protein (276 aa).

156-163 contributes to the ADP binding site; it reads GVSRSGKT.

It belongs to the pyruvate, phosphate/water dikinase regulatory protein family. PSRP subfamily.

The enzyme catalyses [pyruvate, water dikinase] + ADP = [pyruvate, water dikinase]-phosphate + AMP + H(+). It catalyses the reaction [pyruvate, water dikinase]-phosphate + phosphate + H(+) = [pyruvate, water dikinase] + diphosphate. Bifunctional serine/threonine kinase and phosphorylase involved in the regulation of the phosphoenolpyruvate synthase (PEPS) by catalyzing its phosphorylation/dephosphorylation. The polypeptide is Putative phosphoenolpyruvate synthase regulatory protein (Acidovorax ebreus (strain TPSY) (Diaphorobacter sp. (strain TPSY))).